Here is a 183-residue protein sequence, read N- to C-terminus: UPF0397 protein EAT1b_2102 (183 aa).

Transmembrane regions (helical) follow at residues 9–29 (IVATGIGAAVFIILSRFAAIP), 42–62 (AFLAFMAVLFGPITAGLIGLI), 74–94 (SPWWSWVIVSGFVGLGIGLIA), 117–137 (AVVQAIGWIVIAPVLDILIYA), and 147–167 (GAVAATSNILTVGVIGTLLLV).

The protein belongs to the UPF0397 family.

It localises to the cell membrane. In Exiguobacterium sp. (strain ATCC BAA-1283 / AT1b), this protein is UPF0397 protein EAT1b_2102.